We begin with the raw amino-acid sequence, 384 residues long: Protein cutoff (384 aa).

Belongs to the DXO/Dom3Z family. In terms of assembly, component of the Rhino-Deadlock-Cutoff (RDC) complex, composed of rhi/rhino, del/deadlock and cuff/cutoff. Interacts with rhi/rhino; this interaction is indirect and is mediated by del/deadlock. Interacts with del/deadlock (via C-terminal); this interaction is direct. Interacts with Rat1.

It localises to the cytoplasm. The protein resides in the nucleus. It is found in the chromosome. Its function is as follows. Involved in the piRNA pathway in germline tissues. Part of the Rhino-Deadlock-Cutoff (RDC) complex that stimulates piRNA biogenesis from chromatin regions corresponding to dual-strand, but not single-stranded, piRNA clusters. Promotes transcription of long piRNA precursors by preventing termination at canonical poly(A) sites. As part of the RDC complex, is recruited to chromatin enriched in histone modification H3K9me3 and might contribute to complex interaction by binding nascent transcript nucleic acid chains. Associates with chromatin upon exposure to homologous piRNA. Suppresses cleavage at canonical poly(A) sites by blocking recruitment of the cleavage and polyadenylation specificity factor (CPSF) complex and prevents transcriptional termination by RNA polymerase II, facilitating transcriptional read-through. As part of the RDC complex, involved in suppression of splicing. Catalytically inactive, lacking 5'-3' exonuclease and pyrophosphohydrolase activities. Stabilizes uncapped piRNA precursors in the nucleus, probably by sequestering or blocking the exonuclease activity of Rat1. May also be involved in siRNA biogenesis from dual-strand piRNA clusters. The protein is Protein cutoff (cuff) of Drosophila melanogaster (Fruit fly).